The sequence spans 383 residues: BRISC and BRCA1-A complex member 2 (383 aa).

At M1 the chain carries N-acetylmethionine. Residue S2 is modified to Phosphoserine. UEV-like stretches follow at residues 30 to 147 (DATN…TLLE) and 275 to 364 (IAAF…RAKA).

This sequence belongs to the BABAM2 family. In terms of assembly, component of the ARISC complex, at least composed of UIMC1/RAP80, ABRAXAS1, BRCC3/BRCC36, BABAM2 and BABAM1/NBA1. Component of the BRCA1-A complex, at least composed of BRCA1, BARD1, UIMC1/RAP80, ABRAXAS1, BRCC3/BRCC36, BABAM2 and BABAM1/NBA1. In the BRCA1-A complex, interacts directly with ABRAXAS1, BRCC3/BRCC36 and BABAM1/NBA1. Binds polyubiquitin. Component of the BRISC complex, at least composed of ABRAXAS2, BRCC3/BRCC36, BABAM2 and BABAM1/NBA1. Identified in a complex with SHMT2 and the other subunits of the BRISC complex. Component of the BRCA1/BRCA2 containing complex (BRCC), which also contains BRCA1, BRCA2, BARD1, BRCC3/BRCC36 and RAD51. BRCC is a ubiquitin E3 ligase complex that enhances cellular survival following DNA damage. May interact with FAS and TNFRSF1A.

Its subcellular location is the cytoplasm. The protein resides in the nucleus. Component of the BRCA1-A complex, a complex that specifically recognizes 'Lys-63'-linked ubiquitinated histones H2A and H2AX at DNA lesions sites, leading to target the BRCA1-BARD1 heterodimer to sites of DNA damage at double-strand breaks (DSBs). The BRCA1-A complex also possesses deubiquitinase activity that specifically removes 'Lys-63'-linked ubiquitin on histones H2A and H2AX. In the BRCA1-A complex, it acts as an adapter that bridges the interaction between BABAM1/NBA1 and the rest of the complex, thereby being required for the complex integrity and modulating the E3 ubiquitin ligase activity of the BRCA1-BARD1 heterodimer. Component of the BRISC complex, a multiprotein complex that specifically cleaves 'Lys-63'-linked ubiquitin in various substrates. Within the BRISC complex, acts as an adapter that bridges the interaction between BABAM1/NBA1 and the rest of the complex, thereby being required for the complex integrity. The BRISC complex is required for normal mitotic spindle assembly and microtubule attachment to kinetochores via its role in deubiquitinating NUMA1. The BRISC complex plays a role in interferon signaling via its role in the deubiquitination of the interferon receptor IFNAR1; deubiquitination increases IFNAR1 activity by enhancing its stability and cell surface expression. Down-regulates the response to bacterial lipopolysaccharide (LPS) via its role in IFNAR1 deubiquitination. May play a role in homeostasis or cellular differentiation in cells of neural, epithelial and germline origins. May also act as a death receptor-associated anti-apoptotic protein, which inhibits the mitochondrial apoptotic pathway. May regulate TNF-alpha signaling through its interactions with TNFRSF1A; however these effects may be indirect. In Chlorocebus aethiops (Green monkey), this protein is BRISC and BRCA1-A complex member 2 (BABAM2).